Consider the following 206-residue polypeptide: Small ribosomal subunit protein uS4 (206 aa).

Positions 28–48 (YMERRPYGPGEHGRARKKQDS) are disordered. In terms of domain architecture, S4 RNA-binding spans 95–160 (MRLDALVLRA…MPPFQVAAAG (66 aa)).

This sequence belongs to the universal ribosomal protein uS4 family. As to quaternary structure, part of the 30S ribosomal subunit. Contacts protein S5. The interaction surface between S4 and S5 is involved in control of translational fidelity.

In terms of biological role, one of the primary rRNA binding proteins, it binds directly to 16S rRNA where it nucleates assembly of the body of the 30S subunit. Functionally, with S5 and S12 plays an important role in translational accuracy. In Paenarthrobacter aurescens (strain TC1), this protein is Small ribosomal subunit protein uS4.